We begin with the raw amino-acid sequence, 344 residues long: D-beta-hydroxybutyrate dehydrogenase, mitochondrial (344 aa).

The N-terminal 46 residues, 1 to 46 (MLTARLSRPLSQLPRKTLNFSDRENGTRGSLLLYSAPFVPVGRRTY), are a transit peptide targeting the mitochondrion. Position 59–83 (59–83 (LITGCDSGFGFSLAKHLHSEGFLVF)) interacts with NAD(+). 2 positions are modified to N6-acetyllysine: K73 and K97. At K103 the chain carries N6-acetyllysine; alternate. K103 carries the post-translational modification N6-succinyllysine; alternate. K177 is modified (N6-acetyllysine). S195 serves as a coordination point for substrate. Residue Y208 is the Proton acceptor of the active site. N6-acetyllysine is present on K212. Residue S219 is glycosylated (O-linked (GlcNAc) serine). S246 carries the post-translational modification Phosphoserine. K260 carries the N6-acetyllysine; alternate modification. K260 is subject to N6-succinyllysine; alternate. At K281 the chain carries N6-acetyllysine.

Belongs to the short-chain dehydrogenases/reductases (SDR) family. As to quaternary structure, homotetramer.

Its subcellular location is the mitochondrion inner membrane. The protein localises to the mitochondrion matrix. The enzyme catalyses (R)-3-hydroxybutanoate + NAD(+) = acetoacetate + NADH + H(+). With respect to regulation, requires phosphatidylcholine as an allosteric activator for enzymatic activity. This is D-beta-hydroxybutyrate dehydrogenase, mitochondrial from Bos taurus (Bovine).